Here is a 612-residue protein sequence, read N- to C-terminus: Membrane protein insertase YidC (612 aa).

Transmembrane regions (helical) follow at residues 4 to 24, 329 to 349, 358 to 378, 434 to 454, 484 to 504, 524 to 544, and 546 to 566; these read NTIIGFILIFWVLFGFAYLNH, LVPLGWSLFRAINKCLIIPIF, VNLGLAILILTLIIKIALFPL, ILLQMPFLIALFMFFPSAIGL, FLGNHISLFCLLMSLATILNT, LTMYFMPVVMFFFLNSYPAGL, and YYYLISTLITIMQTIIFRGLV.

It belongs to the OXA1/ALB3/YidC family. Type 1 subfamily. In terms of assembly, interacts with the Sec translocase complex via SecD. Specifically interacts with transmembrane segments of nascent integral membrane proteins during membrane integration.

The protein resides in the cell inner membrane. In terms of biological role, required for the insertion and/or proper folding and/or complex formation of integral membrane proteins into the membrane. Involved in integration of membrane proteins that insert both dependently and independently of the Sec translocase complex, as well as at least some lipoproteins. Aids folding of multispanning membrane proteins. The sequence is that of Membrane protein insertase YidC from Azobacteroides pseudotrichonymphae genomovar. CFP2.